Consider the following 238-residue polypeptide: Ribonuclease PH (238 aa).

Phosphate is bound by residues Arg-86 and 124-126; that span reads GTR.

It belongs to the RNase PH family. In terms of assembly, homohexameric ring arranged as a trimer of dimers.

It carries out the reaction tRNA(n+1) + phosphate = tRNA(n) + a ribonucleoside 5'-diphosphate. Phosphorolytic 3'-5' exoribonuclease that plays an important role in tRNA 3'-end maturation. Removes nucleotide residues following the 3'-CCA terminus of tRNAs; can also add nucleotides to the ends of RNA molecules by using nucleoside diphosphates as substrates, but this may not be physiologically important. Probably plays a role in initiation of 16S rRNA degradation (leading to ribosome degradation) during starvation. The sequence is that of Ribonuclease PH from Mannheimia haemolytica (Pasteurella haemolytica).